Reading from the N-terminus, the 215-residue chain is Probable transaldolase (215 aa).

The Schiff-base intermediate with substrate role is filled by Lys-83.

The protein belongs to the transaldolase family. Type 3B subfamily.

The protein localises to the cytoplasm. The catalysed reaction is D-sedoheptulose 7-phosphate + D-glyceraldehyde 3-phosphate = D-erythrose 4-phosphate + beta-D-fructose 6-phosphate. The protein operates within carbohydrate degradation; pentose phosphate pathway; D-glyceraldehyde 3-phosphate and beta-D-fructose 6-phosphate from D-ribose 5-phosphate and D-xylulose 5-phosphate (non-oxidative stage): step 2/3. In terms of biological role, transaldolase is important for the balance of metabolites in the pentose-phosphate pathway. This is Probable transaldolase from Anaeromyxobacter sp. (strain Fw109-5).